An 86-amino-acid polypeptide reads, in one-letter code: Apolipoprotein C-I (86 aa).

Residues 1–26 form the signal peptide; the sequence is MRLFLSLPVLVVALLMILEGPGPAQG.

This sequence belongs to the apolipoprotein C1 family.

It is found in the secreted. Functionally, inhibitor of lipoprotein binding to the low density lipoprotein (LDL) receptor, LDL receptor-related protein, and very low density lipoprotein (VLDL) receptor. Associates with high density lipoproteins (HDL) and the triacylglycerol-rich lipoproteins in the plasma and makes up about 10% of the protein of the VLDL and 2% of that of HDL. Appears to interfere directly with fatty acid uptake and is also the major plasma inhibitor of cholesteryl ester transfer protein (CETP). Binds free fatty acids and reduces their intracellular esterification. Modulates the interaction of APOE with beta-migrating VLDL and inhibits binding of beta-VLDL to the LDL receptor-related protein. In Aotus nancymaae (Ma's night monkey), this protein is Apolipoprotein C-I (APOC1).